Here is a 526-residue protein sequence, read N- to C-terminus: Ribonuclease Y (526 aa).

A helical transmembrane segment spans residues 10–30 (ITFILLIVVGALGGALVGYFI). The KH domain maps to 216–279 (TVTVVEIPNE…EVAKRALTIL (64 aa)). In terms of domain architecture, HD spans 342 to 435 (VLKHSIEVAF…VAAADALSAA (94 aa)).

This sequence belongs to the RNase Y family.

The protein resides in the cell membrane. In terms of biological role, endoribonuclease that initiates mRNA decay. This Acholeplasma laidlawii (strain PG-8A) protein is Ribonuclease Y.